Here is an 859-residue protein sequence, read N- to C-terminus: Heat shock protein 105 kDa (859 aa).

An N-acetylserine modification is found at Ser2. Lys471 is subject to N6-acetyllysine. Phosphoserine is present on residues Ser509 and Ser510. Disordered regions lie at residues 515-585 (MDCQ…PPEA) and 797-859 (CEPV…MDLD). Residues 533–555 (QQDNNEAGTQPQVQTDGHQTSQS) are compositionally biased toward polar residues. The residue at position 558 (Ser558) is a Phosphoserine. Thr562 carries the phosphothreonine modification. Basic and acidic residues-rich tracts occupy residues 564–585 (EENK…PPEA) and 806–815 (PKIESPKLER). Ser810 bears the Phosphoserine mark. Residue Thr816 is modified to Phosphothreonine. Basic and acidic residues predominate over residues 822–831 (TDKKEEDLDG). Positions 850 to 859 (EKSSINMDLD) are enriched in polar residues.

Belongs to the heat shock protein 70 family. In terms of assembly, interacts with HSPA8/HSC70. Interacts with HSPA1A (via NBD) and HSPA1B (via NBD). In terms of processing, phosphorylation on Ser-509 may be important for regulation of the HSPA8/HSC70 chaperone activity.

It is found in the cytoplasm. Acts as a nucleotide-exchange factor (NEF) for chaperone proteins HSPA1A and HSPA1B, promoting the release of ADP from HSPA1A/B thereby triggering substrate release. Prevents the aggregation of denatured proteins in cells under severe stress, on which the ATP levels decrease markedly. Inhibits HSPA8/HSC70 ATPase and chaperone activities. In Bos taurus (Bovine), this protein is Heat shock protein 105 kDa (HSPH1).